The primary structure comprises 180 residues: ATP-dependent protease subunit HslV (180 aa).

Thr-5 is a catalytic residue. Na(+) contacts are provided by Gly-161, Cys-164, and Thr-167.

This sequence belongs to the peptidase T1B family. HslV subfamily. In terms of assembly, a double ring-shaped homohexamer of HslV is capped on each side by a ring-shaped HslU homohexamer. The assembly of the HslU/HslV complex is dependent on binding of ATP.

The protein resides in the cytoplasm. The catalysed reaction is ATP-dependent cleavage of peptide bonds with broad specificity.. Its activity is regulated as follows. Allosterically activated by HslU binding. Functionally, protease subunit of a proteasome-like degradation complex believed to be a general protein degrading machinery. In Campylobacter curvus (strain 525.92), this protein is ATP-dependent protease subunit HslV.